Consider the following 861-residue polypeptide: Xylan 1,4-beta-xylosidase (861 aa).

The first 19 residues, methionine 1–alanine 19, serve as a signal peptide directing secretion. Catalysis depends on aspartate 269, which acts as the Nucleophile. Positions aspartate 458 to lysine 600 constitute a PA14 domain. Glutamate 616 (proton donor/acceptor) is an active-site residue.

This sequence belongs to the glycosyl hydrolase 3 family. Exists as a large polymeric species, presumably as a homononamer.

It catalyses the reaction Hydrolysis of (1-&gt;4)-beta-D-xylans, to remove successive D-xylose residues from the non-reducing termini.. The enzyme catalyses Hydrolysis of terminal non-reducing alpha-L-arabinofuranoside residues in alpha-L-arabinosides.. The protein operates within glycan degradation; xylan degradation. In terms of biological role, involved in degradation of plant cell wall polysaccharides. Has beta-xylosidase activity via its capacity to hydrolyze glycosidic linkages of beta-1,4-xylo-oligosaccharides of various lengths (X2 to X6), releasing xylose monomers. To a much lesser extent, also has alpha-L-arabinofuranosidase activity. Does not possess beta-D-glucosidase activity. Acts synergistically with Xyn10D-Fae1A to increase the release of xylose from xylan. The protein is Xylan 1,4-beta-xylosidase of Xylanibacter ruminicola (strain ATCC 19189 / DSM 19721 / CIP 105475 / JCM 8958 / 23) (Prevotella ruminicola).